Reading from the N-terminus, the 404-residue chain is Glucoside xylosyltransferase 1 (404 aa).

Topologically, residues 1–6 are cytoplasmic; it reads MRRYLR. A helical; Signal-anchor for type II membrane protein membrane pass occupies residues 7 to 29; the sequence is VVGLCLACGFCSLLYAFSQLAVS. The Lumenal segment spans residues 30–404; the sequence is LEEGAAGGRR…NRYDTPPKER (375 aa). N-linked (GlcNAc...) asparagine glycosylation is present at Asn201.

This sequence belongs to the glycosyltransferase 8 family.

The protein resides in the membrane. It catalyses the reaction 3-O-(beta-D-glucosyl)-L-seryl-[EGF-like domain protein] + UDP-alpha-D-xylose = 3-O-[alpha-D-xylosyl-(1-&gt;3)-beta-D-glucosyl]-L-seryl-[EGF-like domain protein] + UDP + H(+). Its function is as follows. Glycosyltransferase which elongates the O-linked glucose attached to EGF-like repeats in the extracellular domain of Notch proteins by catalyzing the addition of xylose. In Mus musculus (Mouse), this protein is Glucoside xylosyltransferase 1 (Gxylt1).